The following is a 196-amino-acid chain: ATP-dependent Clp protease proteolytic subunit (196 aa).

The active-site Nucleophile is the Ser-98. His-123 is an active-site residue.

It belongs to the peptidase S14 family. In terms of assembly, fourteen ClpP subunits assemble into 2 heptameric rings which stack back to back to give a disk-like structure with a central cavity, resembling the structure of eukaryotic proteasomes.

It localises to the cytoplasm. It carries out the reaction Hydrolysis of proteins to small peptides in the presence of ATP and magnesium. alpha-casein is the usual test substrate. In the absence of ATP, only oligopeptides shorter than five residues are hydrolyzed (such as succinyl-Leu-Tyr-|-NHMec, and Leu-Tyr-Leu-|-Tyr-Trp, in which cleavage of the -Tyr-|-Leu- and -Tyr-|-Trp bonds also occurs).. Functionally, cleaves peptides in various proteins in a process that requires ATP hydrolysis. Has a chymotrypsin-like activity. Plays a major role in the degradation of misfolded proteins. The protein is ATP-dependent Clp protease proteolytic subunit of Geobacillus thermodenitrificans (strain NG80-2).